Reading from the N-terminus, the 97-residue chain is Small ribosomal subunit protein bS6 (97 aa).

This sequence belongs to the bacterial ribosomal protein bS6 family.

Functionally, binds together with bS18 to 16S ribosomal RNA. The polypeptide is Small ribosomal subunit protein bS6 (Listeria monocytogenes serotype 4b (strain CLIP80459)).